A 451-amino-acid polypeptide reads, in one-letter code: Trigger factor (451 aa).

The 86-residue stretch at 163–248 (GDIIDMEYTV…IKALYANILP (86 aa)) folds into the PPIase FKBP-type domain.

This sequence belongs to the FKBP-type PPIase family. Tig subfamily.

Its subcellular location is the cytoplasm. The enzyme catalyses [protein]-peptidylproline (omega=180) = [protein]-peptidylproline (omega=0). In terms of biological role, involved in protein export. Acts as a chaperone by maintaining the newly synthesized protein in an open conformation. Functions as a peptidyl-prolyl cis-trans isomerase. The polypeptide is Trigger factor (Leptospira interrogans serogroup Icterohaemorrhagiae serovar copenhageni (strain Fiocruz L1-130)).